The chain runs to 160 residues: 6,7-dimethyl-8-ribityllumazine synthase (160 aa).

5-amino-6-(D-ribitylamino)uracil-binding positions include tryptophan 27, 59-61 (AIE), and 81-83 (VVI). (2S)-2-hydroxy-3-oxobutyl phosphate is bound at residue 86–87 (QT). Histidine 89 serves as the catalytic Proton donor. Asparagine 114 contacts 5-amino-6-(D-ribitylamino)uracil. Arginine 128 contributes to the (2S)-2-hydroxy-3-oxobutyl phosphate binding site.

This sequence belongs to the DMRL synthase family. As to quaternary structure, homopentamer.

The enzyme catalyses (2S)-2-hydroxy-3-oxobutyl phosphate + 5-amino-6-(D-ribitylamino)uracil = 6,7-dimethyl-8-(1-D-ribityl)lumazine + phosphate + 2 H2O + H(+). It functions in the pathway cofactor biosynthesis; riboflavin biosynthesis; riboflavin from 2-hydroxy-3-oxobutyl phosphate and 5-amino-6-(D-ribitylamino)uracil: step 1/2. Catalyzes the formation of 6,7-dimethyl-8-ribityllumazine by condensation of 5-amino-6-(D-ribitylamino)uracil with 3,4-dihydroxy-2-butanone 4-phosphate. This is the penultimate step in the biosynthesis of riboflavin. This is 6,7-dimethyl-8-ribityllumazine synthase from Mycolicibacterium paratuberculosis (strain ATCC BAA-968 / K-10) (Mycobacterium paratuberculosis).